Here is a 515-residue protein sequence, read N- to C-terminus: Probable NADPH:adrenodoxin oxidoreductase, mitochondrial (515 aa).

Alanine 52, glutamate 73, leucine 81, and isoleucine 119 together coordinate FAD. NADP(+) contacts are provided by residues 191 to 194 (QGNV), 236 to 237 (RR), and glutamate 248. FAD contacts are provided by residues tryptophan 419 and 426–428 (GSI). Glycine 426 lines the NADP(+) pocket.

Belongs to the ferredoxin--NADP reductase type 1 family. FAD serves as cofactor.

It localises to the mitochondrion inner membrane. The catalysed reaction is 2 reduced [adrenodoxin] + NADP(+) + H(+) = 2 oxidized [adrenodoxin] + NADPH. In Dictyostelium discoideum (Social amoeba), this protein is Probable NADPH:adrenodoxin oxidoreductase, mitochondrial (fdxr).